The sequence spans 248 residues: NADH dehydrogenase [ubiquinone] flavoprotein 2, mitochondrial (248 aa).

Residues 1–31 (MFSLALRARASGLTAQWGRHARNLHKTAVQN) constitute a mitochondrion transit peptide. Cys134, Cys139, Cys175, and Cys179 together coordinate [2Fe-2S] cluster. Tyr192 is subject to Phosphotyrosine; by SRC. Positions 229–248 (GLTSLTEPPKGPGFGVQAGL) are disordered.

It belongs to the complex I 24 kDa subunit family. In terms of assembly, core subunit of respiratory chain NADH dehydrogenase (Complex I) which is composed of 45 different subunits. This is a component of the flavoprotein-sulfur (FP) fragment of the enzyme. Requires [2Fe-2S] cluster as cofactor.

It is found in the mitochondrion inner membrane. It catalyses the reaction a ubiquinone + NADH + 5 H(+)(in) = a ubiquinol + NAD(+) + 4 H(+)(out). Core subunit of the mitochondrial membrane respiratory chain NADH dehydrogenase (Complex I) which catalyzes electron transfer from NADH through the respiratory chain, using ubiquinone as an electron acceptor. Parts of the peripheral arm of the enzyme, where the electrons from NADH are accepted by flavin mononucleotide (FMN) and then passed along a chain of iron-sulfur clusters by electron tunnelling to the final acceptor ubiquinone. Contains one iron-sulfur cluster. The polypeptide is NADH dehydrogenase [ubiquinone] flavoprotein 2, mitochondrial (Rattus norvegicus (Rat)).